The following is a 1163-amino-acid chain: Voltage-gated inwardly rectifying potassium channel KCNH2 (1163 aa).

Residues 1–405 (MPVRRGHVAP…RIHRWTILHY (405 aa)) lie on the Cytoplasmic side of the membrane. The PAS domain maps to 17-88 (TIIRKFEGQS…AAQIAQALLG (72 aa)). The PAC domain occupies 92 to 144 (RKVEIAFYRKDGSCFLCLVDVVPVKNEDGAVIMFILNFEVVMEKDMVGSPAHD). The interval 235-286 (VGPASASPVASIPGPHPSPRAQSLNPDASGSSCSLARTRSRESCASVRRASS) is disordered. 2 positions are modified to phosphoserine: Ser239 and Ser245. A compositionally biased stretch (polar residues) spans 254–271 (RAQSLNPDASGSSCSLAR). Residues Ser285, Ser286, Ser322, and Ser353 each carry the phosphoserine modification. A helical membrane pass occupies residues 406 to 426 (SPFKAVWDWLILLLVIYTAVF). Residues 427–452 (TPYSAAFLLKETEDGSQAPDCGYACQ) are Extracellular-facing. The chain crosses the membrane as a helical span at residues 453–473 (PLAVVDLLVDIMFIVDILINF). At 474–497 (RTTYVNANEEVVSHPGRIAVHYFK) the chain is on the cytoplasmic side. The chain crosses the membrane as a helical span at residues 498–518 (GWFLIDMVAAIPFDLLIFGSG). Topologically, residues 519-522 (SEEL) are extracellular. Residues 523–543 (IGLLKTARLLRLVRVARKLDR) form a helical; Voltage-sensor membrane-spanning segment. Topologically, residues 544 to 549 (YSEYGA) are cytoplasmic. Residues 550-570 (AVLFLLMCTFALIAHWLACIW) form a helical membrane-spanning segment. The Extracellular segment spans residues 571–613 (YAIGNMEQPHMDSHIGWLHNLGDQIGKPYNSSGLGGPSIKDKY). Asn600 carries N-linked (GlcNAc...) asparagine glycosylation. Positions 614 to 634 (VTALYFTFSSLTSVGFGNVSP) form an intramembrane region, pore-forming. The Selectivity filter motif lies at 626–631 (SVGFGN). Residues 635–640 (NTNSEK) are Extracellular-facing. Residues 641–661 (IFSICVMLIGSLMYASIFGNV) traverse the membrane as a helical segment. Residues 662-1163 (SAIIQRLYSG…LHRHGSDPGS (502 aa)) lie on the Cytoplasmic side of the membrane. Residues 744 to 844 (PFRGATKGCL…IHRDDLLEVL (101 aa)) are cNMP-binding domain. Residues Ser873 and Ser876 each carry the phosphoserine modification. Disordered stretches follow at residues 873–992 (SPSS…NPLS), 1015–1043 (ELPR…GDVE), and 1126–1163 (AGAP…DPGS). Basic residues predominate over residues 885 to 894 (RQRKRKLSFR). The segment covering 932 to 943 (GESPSSGPSSPE) has biased composition (low complexity). Arg1018 carries the post-translational modification Omega-N-methylarginine. Positions 1039-1066 (RGDVESRLDALQRQLNRLETRLSADMAT) form a coiled coil. Residue Ser1141 is modified to Phosphoserine.

Belongs to the potassium channel family. H (Eag) (TC 1.A.1.20) subfamily. Kv11.1/KCNH2 sub-subfamily. As to quaternary structure, the potassium channel is probably composed of a homo- or heterotetrameric complex of pore-forming alpha subunits that can associate with modulating beta subunits. Interacts with DNAJB12 and DNAJB14; chaperones DNAJB12 and DNAJB14 promote tetramerization. Heteromultimer with KCNH6/ERG2 and KCNH7/ERG3. Interacts with ALG10B. Forms a stable complex with KCNE1 or KCNE2, and that this heteromultimerization regulates Inward rectifier potassium channel activity. Interacts with CANX. The core-glycosylated, but not the fully glycosylated form interacts with RNF207. Interacts with NDFIP1 and NDFIP2; this interaction decreases the cell membrane expression by targeting KCNH2, through interaction with NEDD4L, for the degradation through the multivesicular bodies (MVBs)-lysosomal pathway. Post-translationally, phosphorylated on serine and threonine residues. Phosphorylation by PKA inhibits ion conduction. In terms of tissue distribution, highly expressed in brain and testis, slightly less so in heart, adrenal, retina and thymus. Detected at lower levels in lung, soleus, tibialis, and at very low levels in cornea and lens. A shorter transcript is detected in skeletal muscle. Found in pituitary.

The protein resides in the cell membrane. It catalyses the reaction K(+)(in) = K(+)(out). Functionally, pore-forming (alpha) subunit of voltage-gated inwardly rectifying potassium channel. Characterized by unusual gating kinetics by producing relatively small outward currents during membrane depolarization and large inward currents during subsequent repolarization which reflect a rapid inactivation during depolarization and quick recovery from inactivation but slow deactivation (closing) during repolarization. Channel properties are modulated by cAMP and subunit assembly. Forms a stable complex with KCNE1 or KCNE2, and that this heteromultimerization regulates inward rectifier potassium channel activity. The polypeptide is Voltage-gated inwardly rectifying potassium channel KCNH2 (Rattus norvegicus (Rat)).